Here is a 311-residue protein sequence, read N- to C-terminus: Probable manganese-dependent inorganic pyrophosphatase (311 aa).

6 residues coordinate Mn(2+): His-9, Asp-13, Asp-15, Asp-77, His-99, and Asp-151.

Belongs to the PPase class C family. Mn(2+) is required as a cofactor.

The protein resides in the cytoplasm. The catalysed reaction is diphosphate + H2O = 2 phosphate + H(+). The polypeptide is Probable manganese-dependent inorganic pyrophosphatase (Streptococcus equi subsp. zooepidemicus (strain MGCS10565)).